The sequence spans 250 residues: Phosphatidylglycerol--prolipoprotein diacylglyceryl transferase (250 aa).

The next 4 membrane-spanning stretches (helical) occupy residues 11-31, 49-69, 84-104, and 109-129; these read LAIR…LLLA, FLIA…IFEF, QGGL…YIYL, and ESFF…QAIG. Arginine 130 is an a 1,2-diacyl-sn-glycero-3-phospho-(1'-sn-glycerol) binding site. 3 consecutive transmembrane segments (helical) span residues 169–189, 196–216, and 228–248; these read PTFL…VYLL, GIVF…IEGL, and VAQL…YNII.

The protein belongs to the Lgt family.

The protein localises to the cell membrane. The enzyme catalyses L-cysteinyl-[prolipoprotein] + a 1,2-diacyl-sn-glycero-3-phospho-(1'-sn-glycerol) = an S-1,2-diacyl-sn-glyceryl-L-cysteinyl-[prolipoprotein] + sn-glycerol 1-phosphate + H(+). It functions in the pathway protein modification; lipoprotein biosynthesis (diacylglyceryl transfer). Its function is as follows. Catalyzes the transfer of the diacylglyceryl group from phosphatidylglycerol to the sulfhydryl group of the N-terminal cysteine of a prolipoprotein, the first step in the formation of mature lipoproteins. The protein is Phosphatidylglycerol--prolipoprotein diacylglyceryl transferase of Clostridium botulinum (strain 657 / Type Ba4).